We begin with the raw amino-acid sequence, 447 residues long: MREIVHLQTGQCGNQIGAAFWQTISGEHGLDGSGVYNGTSDLQLERMNVYFNEASGNKYVPRAVLVDLEPGTMDAVRAGPFGELFRPDNFVFGQSGAGNNWAKGHYTEGAELVDNVVDVVRREAEGCDCLQGFQITHSLGGGTGAGMGTLLISKIREEFPDRMMATFSVVPSPKVSDTVVEPYNATLSVHQLVEHSDETFCIDNEALYDICMRTLKLSNPSYGDLNHLVSAVMSGVTTCLRFPGQLNSDLRKLAVNMVPFPRLHFFMVGFAPLTSRGAYSFRAVSVPELTQQMFDPKNMMAASDFRNGRYLTCSAIFRGKVSMKEVEDQMRNIQSKNQSYFVEWIPNNIQTALCSIPPRGLKMSSTFIGNSTSIQELFKRVGDQFTAMFRRKAFLHWYTGEGMDEMEFTEAESNMNDLVSEYQQYQDASISEGEEEYAEEEIMEGEE.

Positions 11, 69, 138, 142, 143, 144, 204, and 226 each coordinate GTP. Glu-69 lines the Mg(2+) pocket.

It belongs to the tubulin family. Dimer of alpha and beta chains. A typical microtubule is a hollow water-filled tube with an outer diameter of 25 nm and an inner diameter of 15 nM. Alpha-beta heterodimers associate head-to-tail to form protofilaments running lengthwise along the microtubule wall with the beta-tubulin subunit facing the microtubule plus end conferring a structural polarity. Microtubules usually have 13 protofilaments but different protofilament numbers can be found in some organisms and specialized cells. Mg(2+) is required as a cofactor.

The protein localises to the cytoplasm. It is found in the cytoskeleton. Functionally, tubulin is the major constituent of microtubules, a cylinder consisting of laterally associated linear protofilaments composed of alpha- and beta-tubulin heterodimers. Microtubules grow by the addition of GTP-tubulin dimers to the microtubule end, where a stabilizing cap forms. Below the cap, tubulin dimers are in GDP-bound state, owing to GTPase activity of alpha-tubulin. The protein is Tubulin beta-1 chain (benA) of Emericella nidulans (strain FGSC A4 / ATCC 38163 / CBS 112.46 / NRRL 194 / M139) (Aspergillus nidulans).